The primary structure comprises 686 residues: Cyclic nucleotide-gated channel alpha-1 (686 aa).

The Cytoplasmic portion of the chain corresponds to 1-165 (MKNNIINTQQ…PSGNTYYNWL (165 aa)). Disordered regions lie at residues 31–75 (ENGA…PSQR) and 87–149 (NVNN…EEKK). Over residues 39 to 53 (SEDDDSASTSEESEN) the composition is skewed to acidic residues. The span at 110–124 (SKSDDKNENKNDPEK) shows a compositional bias: basic and acidic residues. The segment covering 125–134 (KKKKKDKEKK) has biased composition (basic residues). The segment covering 135 to 149 (KKEEKSKDKKEEEKK) has biased composition (basic and acidic residues). Residues 166 to 187 (FCITLPVMYNWTMVIARACFDE) traverse the membrane as a helical segment. Over 188-197 (LQSDYLEYWL) the chain is Extracellular. Residues 198–218 (ILDYVSDIVYLIDMFVRTRTG) traverse the membrane as a helical segment. Residues 219-243 (YLEQGLLVKEELKLINKYKSNLQFK) are Cytoplasmic-facing. The chain crosses the membrane as a helical span at residues 244–262 (LDVLSLIPTDLLYFKLGWN). The Extracellular segment spans residues 263–267 (YPEIR). A helical membrane pass occupies residues 268-286 (LNRLLRFSRMFEFFQRTET). Residues 287–293 (RTNYPNI) are Cytoplasmic-facing. The tract at residues 291–399 (PNIFRISNLV…GNIGSMISNM (109 aa)) is ion conduction pathway. Residues 294–317 (FRISNLVMYIVIIIHWNACVFYSI) form a helical membrane-spanning segment. The Extracellular segment spans residues 318–340 (SKAIGFGNDTWVYPDINDPEFGR). N-linked (GlcNAc...) asparagine glycosylation occurs at Asn325. A run of 2 helical transmembrane segments spans residues 341–375 (LARK…VFVV) and 376–400 (VDFL…SNMN). The tract at residues 358 to 361 (TIGE) is selectivity filter. Positions 401 to 477 (AARAEFQARI…DTLKKVRIFA (77 aa)) are C-linker. At 401–686 (AARAEFQARI…GAESGPIDST (286 aa)) the chain is on the cytoplasmic side. Residues 481-601 (AGLLVELVLK…EEKGKQILMK (121 aa)) are cyclic nucleotide-binding domain. 3',5'-cyclic GMP-binding residues include Gly541, Ser544, Arg557, and Thr558. Arg557 and Thr558 together coordinate 3',5'-cyclic AMP. Residues 619-673 (LEEKVTRMEGSVDLLQTRFARILAEYESMQQKLKQRLTKVEKFLKPLIDTEFSSI) are a coiled coil.

This sequence belongs to the cyclic nucleotide-gated cation channel (TC 1.A.1.5) family. CNGA1 subfamily. Forms heterotetrameric channels composed of CNGA1 and CNGB1 subunits with 3:1 stoichiometry. May also form cyclic nucleotide-activated homotetrameric channels, that are efficiently activated by saturating cGMP, but poorly activated by saturating cAMP compared to the heterotetramer with CNGB1. The channel binds Ca(2+)-bound CALM1 via CaM1 and CaM2 regions of the CNGB1 subunit; this interaction modulates the affinity of the channel for cNMPs in response to intracellular Ca(2+) levels. In terms of tissue distribution, rod cells in the retina.

The protein resides in the cell membrane. The enzyme catalyses Ca(2+)(in) = Ca(2+)(out). The catalysed reaction is Na(+)(in) = Na(+)(out). It catalyses the reaction K(+)(in) = K(+)(out). It carries out the reaction NH4(+)(in) = NH4(+)(out). The enzyme catalyses Rb(+)(in) = Rb(+)(out). The catalysed reaction is Li(+)(in) = Li(+)(out). It catalyses the reaction Cs(+)(in) = Cs(+)(out). Channel opening is activated by cGMP and at a much lesser extent by cAMP. Ca(2+) binding concominantly blocks monovalent cation currents. Inhibited by L-cis-diltiazem. Functionally, pore-forming subunit of the rod cyclic nucleotide-gated channel. Mediates rod photoresponses at dim light converting transient changes in intracellular cGMP levels into electrical signals. In the dark, cGMP levels are high and keep the channel open enabling a steady inward current carried by Na(+) and Ca(2+) ions that leads to membrane depolarization and neurotransmitter release from synaptic terminals. Upon photon absorption cGMP levels decline leading to channel closure and membrane hyperpolarization that ultimately slows neurotransmitter release and signals the presence of light, the end point of the phototransduction cascade. Conducts cGMP- and cAMP-gated ion currents, with permeability for monovalent and divalent cations. The selectivity for Ca(2+) over Na(+) increases with cGMP concentrations, whereas the selectivity among monovalent ions is independent of the cGMP levels. The sequence is that of Cyclic nucleotide-gated channel alpha-1 from Homo sapiens (Human).